A 606-amino-acid polypeptide reads, in one-letter code: Limonene synthase, chloroplastic (606 aa).

The transit peptide at 1–38 directs the protein to the chloroplast; that stretch reads MAIINLPVPTNSSSEVNKHNHLRSCLPSGRATFTTLSA. 5 residues coordinate (2E)-geranyl diphosphate: Arg-320, Asp-357, Asp-361, Arg-497, and Asp-500. Mg(2+)-binding residues include Asp-357 and Asp-361. A DDXXD motif motif is present at residues 357-361; it reads DDIYD. Residues Asp-500, Thr-504, and Glu-508 each coordinate Mg(2+).

Belongs to the terpene synthase family. Tpsb subfamily. As to quaternary structure, monomer. Mg(2+) serves as cofactor. Requires Mn(2+) as cofactor. As to expression, confined to fruits.

The protein localises to the plastid. Its subcellular location is the chloroplast. The enzyme catalyses (2E,6E)-farnesyl diphosphate = (E)-beta-farnesene + diphosphate. It catalyses the reaction (2E)-geranyl diphosphate = limonene + diphosphate. It carries out the reaction (2E)-geranyl diphosphate = beta-pinene + diphosphate. The catalysed reaction is (2E)-geranyl diphosphate = sabinene + diphosphate. The enzyme catalyses (2E)-geranyl diphosphate = beta-myrcene + diphosphate. It catalyses the reaction (2E)-geranyl diphosphate = alpha-pinene + diphosphate. It carries out the reaction (2E)-geranyl diphosphate = terpinolene + diphosphate. The protein operates within secondary metabolite biosynthesis; terpenoid biosynthesis. In terms of biological role, monoterpene synthase (mono-TPS) involved in the biosynthesis of monoterpenes natural products, constituent of coffee beverage aroma. Catalyzes the conversion of (2E)-geranyl diphosphate (GPP) into limonene, beta-pinene, sabinene and beta-myrcene, and, as minor products, alpha-pinene and alpha-terpinolene. Can also, with a low efficiency, use farnesyl pyrophosphate (FPP) as substrate to produce beta-farnesene. Not able to use geranylgeranyl pyrophosphate (GGPP) as substrate. The protein is Limonene synthase, chloroplastic of Coffea arabica (Arabian coffee).